The primary structure comprises 85 residues: U4-theraphotoxin-Hhn1a (85 aa).

An N-terminal signal peptide occupies residues 1 to 22; the sequence is MKMTLIAILTCAAVLVLHTTAA. Residues 23–48 constitute a propeptide that is removed on maturation; sequence EELEAESQLMEVGMPDTELEAVDEER. 3 disulfide bridges follow: C52-C66, C56-C77, and C71-C82.

The protein belongs to the neurotoxin 12 (Hwtx-2) family. 02 (Hwtx-2) subfamily. Monomer. Expressed by the venom gland.

The protein resides in the secreted. In terms of biological role, neurotoxin active on both insects and mammals. The polypeptide is U4-theraphotoxin-Hhn1a (Cyriopagopus hainanus (Chinese bird spider)).